The following is a 197-amino-acid chain: Xanthine phosphoribosyltransferase (197 aa).

Positions 20 and 27 each coordinate xanthine. 128–132 is a binding site for 5-phospho-alpha-D-ribose 1-diphosphate; sequence ANGQA. Lys156 contacts xanthine.

Belongs to the purine/pyrimidine phosphoribosyltransferase family. Xpt subfamily. As to quaternary structure, homodimer.

It is found in the cytoplasm. It carries out the reaction XMP + diphosphate = xanthine + 5-phospho-alpha-D-ribose 1-diphosphate. It functions in the pathway purine metabolism; XMP biosynthesis via salvage pathway; XMP from xanthine: step 1/1. In terms of biological role, converts the preformed base xanthine, a product of nucleic acid breakdown, to xanthosine 5'-monophosphate (XMP), so it can be reused for RNA or DNA synthesis. The polypeptide is Xanthine phosphoribosyltransferase (Lactococcus lactis subsp. cremoris (strain SK11)).